The primary structure comprises 119 residues: Large ribosomal subunit protein bL19 (119 aa).

This sequence belongs to the bacterial ribosomal protein bL19 family.

Functionally, this protein is located at the 30S-50S ribosomal subunit interface and may play a role in the structure and function of the aminoacyl-tRNA binding site. This chain is Large ribosomal subunit protein bL19, found in Pseudoalteromonas translucida (strain TAC 125).